Here is a 413-residue protein sequence, read N- to C-terminus: MKIYAVGGAIRDALLGLPVRDRDYVVVGATPEQMAAQRFRPVGKDFPVFLHPDTHEEYALARTERKTAAGYHGFQFYYAPDVTLEQDLVRRDLTINAMAREVSPDGALVGPVVDPFGGQADLRAKLFRHVGDAFVEDPVRILRVARFAARFAEFAVAPDTAALMRAMVDAGEVDALVPERVWQELARGLMEAKPSRMFAVLRECGALARILPEIDALFGVPQRADYHPEVDTGVHVMMVIDHAAKQGYSLAVRFAALTHDLGKATTPADVLPRHIGHEGRSVDLLKPLCERLRVPNECRDLALVVAREHGNLHRVMEMGAAALVRLLERADALRKPARFAEALQASEADARGRLGLETKPYPQAERLRQALVAARAVDAGAIAQGLAGEPAKIKDAVHRARVRAVAQAVGVAD.

2 residues coordinate ATP: Gly8 and Arg11. CTP-binding residues include Gly8 and Arg11. Residues Asp21 and Asp23 each contribute to the Mg(2+) site. Positions 91, 143, and 146 each coordinate ATP. CTP contacts are provided by Arg91, Arg143, and Arg146. An HD domain is found at 232 to 333; sequence TGVHVMMVID…VRLLERADAL (102 aa).

It belongs to the tRNA nucleotidyltransferase/poly(A) polymerase family. Bacterial CCA-adding enzyme type 1 subfamily. As to quaternary structure, monomer. Can also form homodimers and oligomers. Mg(2+) serves as cofactor. The cofactor is Ni(2+).

The enzyme catalyses a tRNA precursor + 2 CTP + ATP = a tRNA with a 3' CCA end + 3 diphosphate. It carries out the reaction a tRNA with a 3' CCA end + 2 CTP + ATP = a tRNA with a 3' CCACCA end + 3 diphosphate. Its function is as follows. Catalyzes the addition and repair of the essential 3'-terminal CCA sequence in tRNAs without using a nucleic acid template. Adds these three nucleotides in the order of C, C, and A to the tRNA nucleotide-73, using CTP and ATP as substrates and producing inorganic pyrophosphate. tRNA 3'-terminal CCA addition is required both for tRNA processing and repair. Also involved in tRNA surveillance by mediating tandem CCA addition to generate a CCACCA at the 3' terminus of unstable tRNAs. While stable tRNAs receive only 3'-terminal CCA, unstable tRNAs are marked with CCACCA and rapidly degraded. This is Multifunctional CCA protein from Burkholderia pseudomallei (strain K96243).